The primary structure comprises 160 residues: Cytochrome b6-f complex subunit 4 (160 aa).

3 helical membrane-spanning segments follow: residues 36 to 56 (LLYI…GLAV), 95 to 115 (LLGV…PFLE), and 131 to 151 (TVFL…ALPI).

The protein belongs to the cytochrome b family. PetD subfamily. The 4 large subunits of the cytochrome b6-f complex are cytochrome b6, subunit IV (17 kDa polypeptide, petD), cytochrome f and the Rieske protein, while the 4 small subunits are petG, petL, petM and petN. The complex functions as a dimer.

The protein localises to the plastid. Its subcellular location is the chloroplast thylakoid membrane. In terms of biological role, component of the cytochrome b6-f complex, which mediates electron transfer between photosystem II (PSII) and photosystem I (PSI), cyclic electron flow around PSI, and state transitions. The sequence is that of Cytochrome b6-f complex subunit 4 from Chara vulgaris (Common stonewort).